Consider the following 546-residue polypeptide: Chaperonin GroEL 2 (546 aa).

ATP-binding positions include 30 to 33, Lys-51, 87 to 91, Gly-415, 479 to 481, and Asp-495; these read TLGP, DGTTT, and NAA. A disordered region spans residues 526-546; it reads KEDAPMPGGMPGGMGGMGMDM. The span at 534-546 shows a compositional bias: gly residues; sequence GMPGGMGGMGMDM.

The protein belongs to the chaperonin (HSP60) family. Forms a cylinder of 14 subunits composed of two heptameric rings stacked back-to-back. Interacts with the co-chaperonin GroES.

The protein localises to the cytoplasm. The catalysed reaction is ATP + H2O + a folded polypeptide = ADP + phosphate + an unfolded polypeptide.. Functionally, together with its co-chaperonin GroES, plays an essential role in assisting protein folding. The GroEL-GroES system forms a nano-cage that allows encapsulation of the non-native substrate proteins and provides a physical environment optimized to promote and accelerate protein folding. This is Chaperonin GroEL 2 from Burkholderia lata (strain ATCC 17760 / DSM 23089 / LMG 22485 / NCIMB 9086 / R18194 / 383).